The chain runs to 113 residues: Gigasin-5 (113 aa).

Component of the organic matrix of calcified shell layers.

The sequence is that of Gigasin-5 from Magallana gigas (Pacific oyster).